A 1219-amino-acid chain; its full sequence is Regulator of telomere elongation helicase 1 (1219 aa).

Positions N7 to H296 constitute a Helicase ATP-binding domain. S42–T49 contributes to the ATP binding site. [4Fe-4S] cluster contacts are provided by C145, C163, C172, and C207. A Nuclear localization signal motif is present at residues K151 to V167. Positions D250–H253 match the DEAH box motif. Disordered regions lie at residues T287–P306, P757–T786, E839–K877, R979–K1005, D1017–K1054, C1132–E1151, and L1159–L1219. Residues P757–P766 are compositionally biased toward low complexity. The segment covering S863–G873 has biased composition (basic and acidic residues). The Nuclear localization signal motif lies at P871–K877. The segment covering K1176–L1185 has biased composition (polar residues). The PIP-box signature appears at Q1178–L1185. Over residues A1200–L1219 the composition is skewed to low complexity.

Belongs to the helicase family. RAD3/XPD subfamily. Interacts with TERF1. Interacts (via PIP-box) with PCNA; the interaction is direct and essential for suppressing telomere fragility. Interacts with MMS19; the interaction mediates the association of RTEL1 with the cytosolic iron-sulfur protein assembly (CIA) complex.

The protein localises to the nucleus. The catalysed reaction is ATP + H2O = ADP + phosphate + H(+). A probable ATP-dependent DNA helicase implicated in telomere-length regulation, DNA repair and the maintenance of genomic stability. Acts as an anti-recombinase to counteract toxic recombination and limit crossover during meiosis. Regulates meiotic recombination and crossover homeostasis by physically dissociating strand invasion events and thereby promotes noncrossover repair by meiotic synthesis dependent strand annealing (SDSA) as well as disassembly of D loop recombination intermediates. Also disassembles T loops and prevents telomere fragility by counteracting telomeric G4-DNA structures, which together ensure the dynamics and stability of the telomere. This chain is Regulator of telomere elongation helicase 1, found in Homo sapiens (Human).